The sequence spans 1100 residues: Formin-like protein 1 (1100 aa).

Low complexity predominate over residues 1–13; sequence MGNAAGSAEQPAG. 4 disordered regions span residues 1–31, 167–200, 446–474, and 510–635; these read MGNA…PMPA, STDN…PKSR, RFSE…TRPS, and TPSG…AKKP. Glycine 2 carries N-myristoyl glycine lipidation. Serine 7 carries the phosphoserine modification. Residues 14–28 show a composition bias toward pro residues; that stretch reads PAAPPPKQPAPPKQP. Positions 27-468 constitute a GBD/FH3 domain; the sequence is QPMPAAGELE…PPEPEKAPPA (442 aa). Serine 184 is subject to Phosphoserine. Positions 517-538 are enriched in low complexity; sequence PTPGVPTGSPSPDLAPAAEPAP. The segment covering 539-615 has biased composition (pro residues); that stretch reads GAAPPPPPPL…PPPPPPPGGP (77 aa). A phosphoserine mark is found at serine 624 and serine 693. The FH2 domain maps to 632–1023; it reads AKKPIQTKFR…QEAGADTPGK (392 aa). A disordered region spans residues 1008–1037; that stretch reads KKEAAAQEAGADTPGKGEPPAPKSPPKARR. The segment covering 1013-1023 has biased composition (low complexity); it reads AQEAGADTPGK. Phosphoserine is present on serine 1031. A DAD domain is found at 1059–1090; it reads SDRDGAIEDIITVIKTVPFTARTGKRTSRLLC.

The protein belongs to the formin homology family. In terms of assembly, interacts with RAC1, PFN1 and PFN2. Interacts (activated by RAC1) with SRGAP2 (via SH3 domain); regulates the actin filament severing activity of FMNL1. Myristoylation mediates membrane localization and blebbing. Expressed in heart, brain, placenta, lung, liver, skeletal muscle, kidney and pancreas.

Its subcellular location is the cytoplasm. It localises to the cell membrane. The protein resides in the cytoplasmic vesicle. The protein localises to the phagosome. It is found in the cell cortex. Its subcellular location is the cell projection. It localises to the bleb. In terms of biological role, may play a role in the control of cell motility and survival of macrophages. Plays a role in the regulation of cell morphology and cytoskeletal organization. Required in the cortical actin filament dynamics and cell shape. The polypeptide is Formin-like protein 1 (FMNL1) (Homo sapiens (Human)).